The sequence spans 261 residues: 1-(5-phosphoribosyl)-5-[(5-phosphoribosylamino)methylideneamino] imidazole-4-carboxamide isomerase (261 aa).

D15 acts as the Proton acceptor in catalysis. The active-site Proton donor is the D136.

It belongs to the HisA/HisF family.

The protein resides in the cytoplasm. It catalyses the reaction 1-(5-phospho-beta-D-ribosyl)-5-[(5-phospho-beta-D-ribosylamino)methylideneamino]imidazole-4-carboxamide = 5-[(5-phospho-1-deoxy-D-ribulos-1-ylimino)methylamino]-1-(5-phospho-beta-D-ribosyl)imidazole-4-carboxamide. Its pathway is amino-acid biosynthesis; L-histidine biosynthesis; L-histidine from 5-phospho-alpha-D-ribose 1-diphosphate: step 4/9. In Synechococcus sp. (strain JA-2-3B'a(2-13)) (Cyanobacteria bacterium Yellowstone B-Prime), this protein is 1-(5-phosphoribosyl)-5-[(5-phosphoribosylamino)methylideneamino] imidazole-4-carboxamide isomerase.